The primary structure comprises 67 residues: Large ribosomal subunit protein uL30 (67 aa).

It belongs to the universal ribosomal protein uL30 family. As to quaternary structure, part of the 50S ribosomal subunit.

The chain is Large ribosomal subunit protein uL30 from Thermotoga maritima (strain ATCC 43589 / DSM 3109 / JCM 10099 / NBRC 100826 / MSB8).